We begin with the raw amino-acid sequence, 1054 residues long: DIS3-like exonuclease 1 (1054 aa).

The region spanning 236–309 (AGIKSGRYIQ…PKNEWKGRTV (74 aa)) is the CSD1 domain. Positions 365-431 (ILVTPWDYRI…GEIATILVEN (67 aa)) constitute a CSD2 domain. The region spanning 465–816 (RKDLRKSHLV…VHRLLMAAIS (352 aa)) is the RNB domain. A Phosphoserine modification is found at serine 989.

The protein belongs to the RNR ribonuclease family. Component of the RNA exosome complex. The catalytically inactive RNA exosome core (Exo-9) complex is believed to associate with catalytic subunits EXOSC10, and DIS3 or DIS3L in cytoplasmic- and nuclear-specific RNA exosome complex forms. Mg(2+) serves as cofactor.

It is found in the cytoplasm. The enzyme catalyses Exonucleolytic cleavage in the 3'- to 5'-direction to yield nucleoside 5'-phosphates.. Its function is as follows. Catalytic component of the RNA exosome complex which has 3'-&gt;5' exoribonuclease activity and participates in a multitude of cellular RNA processing and degradation events. In the cytoplasm, the RNA exosome complex is involved in general mRNA turnover and specifically degrades inherently unstable mRNAs containing AU-rich elements (AREs) within their 3' untranslated regions, and in RNA surveillance pathways, preventing translation of aberrant mRNAs. It seems to be involved in degradation of histone mRNA. The polypeptide is DIS3-like exonuclease 1 (DIS3L) (Homo sapiens (Human)).